The sequence spans 405 residues: Tryptophan synthase beta chain (405 aa).

Lysine 98 carries the N6-(pyridoxal phosphate)lysine modification.

The protein belongs to the TrpB family. Tetramer of two alpha and two beta chains. It depends on pyridoxal 5'-phosphate as a cofactor.

It catalyses the reaction (1S,2R)-1-C-(indol-3-yl)glycerol 3-phosphate + L-serine = D-glyceraldehyde 3-phosphate + L-tryptophan + H2O. The protein operates within amino-acid biosynthesis; L-tryptophan biosynthesis; L-tryptophan from chorismate: step 5/5. In terms of biological role, the beta subunit is responsible for the synthesis of L-tryptophan from indole and L-serine. This is Tryptophan synthase beta chain from Xanthomonas oryzae pv. oryzae (strain MAFF 311018).